A 266-amino-acid chain; its full sequence is Mitochondrial S-adenosylmethionine carrier protein (266 aa).

Solcar repeat units follow at residues 4 to 77 (RELC…AKRF), 85 to 167 (LSPI…LKNL), and 176 to 264 (VDCW…VRSS). 6 helical membrane passes run 5–25 (ELCA…LILF), 49–69 (IYAG…AFFV), 84–104 (YLSP…ACLI), 141–161 (RGYK…FPLW), 181–201 (SAVC…PLDV), and 237–257 (FAGV…FLGA).

Belongs to the mitochondrial carrier (TC 2.A.29) family.

Its subcellular location is the mitochondrion inner membrane. It carries out the reaction S-adenosyl-L-homocysteine(out) + S-adenosyl-L-methionine(in) = S-adenosyl-L-homocysteine(in) + S-adenosyl-L-methionine(out). Its function is as follows. Mitochondrial S-adenosyl-L-methionine/S-adenosyl-L-homocysteine antiporter. Mediates the exchange of cytosolic S-adenosyl-L-methionine, the predominant methyl-group donor for macromolecule methylation processes, for mitochondrial S-adenosylhomocysteine(SAH), a by-product of methylation reactions. The polypeptide is Mitochondrial S-adenosylmethionine carrier protein (slc25a26) (Xenopus laevis (African clawed frog)).